Reading from the N-terminus, the 275-residue chain is Large ribosomal subunit protein uL2 (275 aa).

Residues 219–263 (EVRGAAMNPRDHPHGGGEGRAPRGMPTPKTKWGKPARGVKTRHNP) form a disordered region. Basic and acidic residues predominate over residues 227–239 (PRDHPHGGGEGRA). Residues 249-262 (KWGKPARGVKTRHN) are compositionally biased toward basic residues.

This sequence belongs to the universal ribosomal protein uL2 family. Part of the 50S ribosomal subunit. Forms a bridge to the 30S subunit in the 70S ribosome.

Functionally, one of the primary rRNA binding proteins. Required for association of the 30S and 50S subunits to form the 70S ribosome, for tRNA binding and peptide bond formation. It has been suggested to have peptidyltransferase activity; this is somewhat controversial. Makes several contacts with the 16S rRNA in the 70S ribosome. The polypeptide is Large ribosomal subunit protein uL2 (Roseiflexus castenholzii (strain DSM 13941 / HLO8)).